Reading from the N-terminus, the 511-residue chain is Glucans biosynthesis protein G (511 aa).

An N-terminal signal peptide occupies residues 1–22; sequence MMKMRWLSAAVMLTLYTSSSWA.

The protein belongs to the OpgD/OpgG family.

Its subcellular location is the periplasm. Its pathway is glycan metabolism; osmoregulated periplasmic glucan (OPG) biosynthesis. Involved in the biosynthesis of osmoregulated periplasmic glucans (OPGs). This Shigella flexneri protein is Glucans biosynthesis protein G (mdoG).